An 829-amino-acid polypeptide reads, in one-letter code: DNA ligase (829 aa).

Residues 38 to 42 (DAEYD), 87 to 88 (SL), and Glu-127 contribute to the NAD(+) site. Lys-129 (N6-AMP-lysine intermediate) is an active-site residue. Residues Arg-150, Glu-187, Lys-305, and Lys-329 each coordinate NAD(+). Zn(2+) contacts are provided by Cys-455, Cys-458, Cys-473, and Cys-479. The disordered stretch occupies residues 534–564 (ETADKGSSENENGDAETVSGDLSKYNTQNGK). A BRCT domain is found at 752-829 (GINKAVAGKT…SEAELLTLLC (78 aa)).

This sequence belongs to the NAD-dependent DNA ligase family. LigA subfamily. Mg(2+) is required as a cofactor. Requires Mn(2+) as cofactor.

It catalyses the reaction NAD(+) + (deoxyribonucleotide)n-3'-hydroxyl + 5'-phospho-(deoxyribonucleotide)m = (deoxyribonucleotide)n+m + AMP + beta-nicotinamide D-nucleotide.. In terms of biological role, DNA ligase that catalyzes the formation of phosphodiester linkages between 5'-phosphoryl and 3'-hydroxyl groups in double-stranded DNA using NAD as a coenzyme and as the energy source for the reaction. It is essential for DNA replication and repair of damaged DNA. The polypeptide is DNA ligase (Neisseria gonorrhoeae (strain ATCC 700825 / FA 1090)).